The following is an 89-amino-acid chain: Large ribosomal subunit protein eL34 (89 aa).

Residues 1-22 form a disordered region; it reads MPAPRYKSGSSKKVYRKAPGNS.

Belongs to the eukaryotic ribosomal protein eL34 family.

This is Large ribosomal subunit protein eL34 from Methanococcus maripaludis (strain C5 / ATCC BAA-1333).